Reading from the N-terminus, the 147-residue chain is Nucleoside diphosphate kinase (147 aa).

6 residues coordinate ATP: Lys9, Phe57, Arg85, Thr91, Arg102, and Asn112. The Pros-phosphohistidine intermediate role is filled by His115.

Belongs to the NDK family. In terms of assembly, homotetramer. It depends on Mg(2+) as a cofactor.

It is found in the cytoplasm. It carries out the reaction a 2'-deoxyribonucleoside 5'-diphosphate + ATP = a 2'-deoxyribonucleoside 5'-triphosphate + ADP. The enzyme catalyses a ribonucleoside 5'-diphosphate + ATP = a ribonucleoside 5'-triphosphate + ADP. In terms of biological role, major role in the synthesis of nucleoside triphosphates other than ATP. The ATP gamma phosphate is transferred to the NDP beta phosphate via a ping-pong mechanism, using a phosphorylated active-site intermediate. In Listeria monocytogenes serotype 4b (strain CLIP80459), this protein is Nucleoside diphosphate kinase.